We begin with the raw amino-acid sequence, 545 residues long: E3 ubiquitin-protein ligase ipaH9.8 (545 aa).

The interaction with target proteins stretch occupies residues Met-1–Met-242. LRR repeat units lie at residues Asn-57–Ala-77, Gln-78–Leu-99, Lys-100–Pro-117, Ala-118–Leu-139, Leu-140–Gln-157, Ala-158–Asn-179, Val-182–Leu-203, and Asn-205–Thr-228. The interval Ser-243–Leu-250 is linker. An E3 ubiquitin-protein ligase catalytic domain region spans residues His-251–Ser-545. Residues Pro-253–Ser-545 form the NEL domain. Cys-337 acts as the Glycyl thioester intermediate in catalysis.

It belongs to the LRR-containing bacterial E3 ligase family. As to quaternary structure, also interacts with human and mouse U2AF1 (U2AF35). Post-translationally, ubiquitinated in the presence of host E1 ubiquitin-activating enzyme, E2 ubiquitin-conjugating enzyme and ubiquitin.

Its subcellular location is the secreted. It is found in the host cytoplasm. The protein localises to the host nucleus. It catalyses the reaction S-ubiquitinyl-[E2 ubiquitin-conjugating enzyme]-L-cysteine + [acceptor protein]-L-lysine = [E2 ubiquitin-conjugating enzyme]-L-cysteine + N(6)-ubiquitinyl-[acceptor protein]-L-lysine.. With respect to regulation, exists in an autoinhibited state in the absence of substrate protein, due to interactions of the leucine-rich repeats with NEL domain. Is activated upon binding to a substrate protein. In terms of biological role, effector E3 ubiquitin ligase that interferes with host's ubiquitination pathway and modulates the acute inflammatory responses, thus facilitating bacterial colonization within the host cell. Interacts with IKBKG (NEMO) and TNIP1 (ABIN-1), a ubiquitin-binding adapter protein, which results in TNIP1-dependent 'Lys-27'-linked polyubiquitination of IKBKG. Consequently, polyubiquitinated IKBKG undergoes proteasome-dependent degradation, which perturbs NF-kappa-B activation during bacterial infection. Mediates polyubiquitination of host U2AF1, leading to its proteasomal degradation. Catalyzes 'Lys-48'-linked polyubiquitination and subsequent degradation of a subset of host guanylate-binding proteins (GBP1, GBP2, GBP4 and GBP6), thereby suppressing host cell defense. In contrast, host GBP3 and GBP7 are not ubiquitinated by IpaH9.8. Uses UBE2D2 (UBCH5B) as an E2 ubiquitin-conjugating enzyme. In Shigella boydii serotype 18 (strain CDC 3083-94 / BS512), this protein is E3 ubiquitin-protein ligase ipaH9.8 (ipaH9.8).